Here is a 616-residue protein sequence, read N- to C-terminus: Glutamine--fructose-6-phosphate aminotransferase [isomerizing] (616 aa).

C2 acts as the Nucleophile; for GATase activity in catalysis. The Glutamine amidotransferase type-2 domain maps to 2–221; the sequence is CGIVGYVGTD…QDQIVTITPE (220 aa). 2 consecutive SIS domains span residues 288–428 and 461–606; these read LGDE…VRGT and LAHW…VDQP. The active-site For Fru-6P isomerization activity is K611.

Homodimer.

Its subcellular location is the cytoplasm. It catalyses the reaction D-fructose 6-phosphate + L-glutamine = D-glucosamine 6-phosphate + L-glutamate. Functionally, catalyzes the first step in hexosamine metabolism, converting fructose-6P into glucosamine-6P using glutamine as a nitrogen source. The polypeptide is Glutamine--fructose-6-phosphate aminotransferase [isomerizing] (Leifsonia xyli subsp. xyli (strain CTCB07)).